The following is a 149-amino-acid chain: Pleckstrin homology domain-containing family J member 1 (149 aa).

The 94-residue stretch at 15–108 folds into the PH domain; that stretch reads PAEMAAELGM…WMAALRQASY (94 aa).

In Bos taurus (Bovine), this protein is Pleckstrin homology domain-containing family J member 1 (PLEKHJ1).